The following is a 93-amino-acid chain: Small ribosomal subunit protein uS19 (93 aa).

The protein belongs to the universal ribosomal protein uS19 family.

Its function is as follows. Protein S19 forms a complex with S13 that binds strongly to the 16S ribosomal RNA. The polypeptide is Small ribosomal subunit protein uS19 (Mycobacteroides abscessus (strain ATCC 19977 / DSM 44196 / CCUG 20993 / CIP 104536 / JCM 13569 / NCTC 13031 / TMC 1543 / L948) (Mycobacterium abscessus)).